The following is a 116-amino-acid chain: Large ribosomal subunit protein uL18 (116 aa).

This sequence belongs to the universal ribosomal protein uL18 family. Part of the 50S ribosomal subunit; part of the 5S rRNA/L5/L18/L25 subcomplex. Contacts the 5S and 23S rRNAs.

In terms of biological role, this is one of the proteins that bind and probably mediate the attachment of the 5S RNA into the large ribosomal subunit, where it forms part of the central protuberance. The protein is Large ribosomal subunit protein uL18 of Cellvibrio japonicus (strain Ueda107) (Pseudomonas fluorescens subsp. cellulosa).